We begin with the raw amino-acid sequence, 458 residues long: Cysteine--tRNA ligase (458 aa).

Residue C29 participates in Zn(2+) binding. Positions 31-41 (PTVYDFLHIGN) match the 'HIGH' region motif. The Zn(2+) site is built by C211, H236, and E240. The 'KMSKS' region signature appears at 269–273 (KMSKS). ATP is bound at residue K272.

This sequence belongs to the class-I aminoacyl-tRNA synthetase family. As to quaternary structure, monomer. It depends on Zn(2+) as a cofactor.

The protein localises to the cytoplasm. The catalysed reaction is tRNA(Cys) + L-cysteine + ATP = L-cysteinyl-tRNA(Cys) + AMP + diphosphate. The chain is Cysteine--tRNA ligase from Beijerinckia indica subsp. indica (strain ATCC 9039 / DSM 1715 / NCIMB 8712).